A 379-amino-acid polypeptide reads, in one-letter code: MSEEVSKRVEEEADTPGLEGQSDDSSDEGDASGDTEMDFLRSLFSRTLGLSPGDKVLDELTLDSVARYILSGKCKNIICMVGAGISTSAGIPDFRSPGTGLYANLQKYNLPYPEAIFQIDYFKKHPEPFFALARELYPGQFKPTVYHYFIKMLKDKGLLRRCYSQNIDTLERVAGLEGEDLIEAHGTFHTSHCVSFLCRKEYSMDWMKNQIFSEEIPKCDSCGSLVKPDIVFFGESLPSRFFTSMKADFPQCDLLIIMGTSLQVQPFASLVSRVSNRCPRLLINMEKTGQSEFGMGLFSFGGGMDFDSDKAYRDVAHLSTCDDGCMTLAELLGWKKELEEMVKREHALIDSKDAKKTDKEASQSSKSAVAEAEKTDKTE.

Over residues 1–10 the composition is skewed to basic and acidic residues; it reads MSEEVSKRVE. Residues 1 to 32 form a disordered region; the sequence is MSEEVSKRVEEEADTPGLEGQSDDSSDEGDAS. The segment covering 21–32 has biased composition (acidic residues); it reads QSDDSSDEGDAS. Residues 55 to 335 form the Deacetylase sirtuin-type domain; that stretch reads KVLDELTLDS…MTLAELLGWK (281 aa). Residues 83 to 87, 93 to 95, and 165 to 168 each bind NAD(+); these read AGIST, DFR, and QNID. The Proton acceptor role is filled by H185. The Zn(2+) site is built by C193, C198, C219, and C222. Residues 260-261, 284-286, and C321 each bind NAD(+); these read TS and NME. Positions 349–361 are enriched in basic and acidic residues; it reads IDSKDAKKTDKEA. Residues 349–379 form a disordered region; the sequence is IDSKDAKKTDKEASQSSKSAVAEAEKTDKTE.

This sequence belongs to the sirtuin family. Class I subfamily. It depends on Zn(2+) as a cofactor.

It localises to the cytoplasm. Its subcellular location is the nucleus. The enzyme catalyses N(6)-acetyl-L-lysyl-[protein] + NAD(+) + H2O = 2''-O-acetyl-ADP-D-ribose + nicotinamide + L-lysyl-[protein]. The catalysed reaction is N(6)-tetradecanoyl-L-lysyl-[protein] + NAD(+) + H2O = 2''-O-tetradecanoyl-ADP-D-ribose + nicotinamide + L-lysyl-[protein]. It catalyses the reaction N(6)-hexadecanoyl-L-lysyl-[protein] + NAD(+) + H2O = 2''-O-hexadecanoyl-ADP-D-ribose + nicotinamide + L-lysyl-[protein]. In terms of biological role, NAD-dependent protein deacetylase, which deacetylates internal lysines on histone and alpha-tubulin as well as many other proteins such as key transcription factors. Participates in the modulation of multiple and diverse biological processes such as cell cycle control, genomic integrity, microtubule dynamics, cell differentiation, metabolic networks, and autophagy. Plays a major role in the control of cell cycle progression and genomic stability. Deacetylates histone H4 at 'Lys-16' (H4K16ac) at the VEGFA promoter. Thereby contributes to regulate expression of vegfa, a key regulator of angiogenesis. In addition to protein deacetylase activity, also has activity toward long-chain fatty acyl groups and mediates protein-lysine demyristoylation and depalmitoylation of target proteins. This chain is NAD-dependent protein deacetylase sirtuin-2 (sirt2), found in Danio rerio (Zebrafish).